The primary structure comprises 373 residues: ADP-forming sulfoacetate-CoA ligase subunit SauC (373 aa).

The 241-residue stretch at 9-249 (KEAFREKGLP…YLQFNGDIAL (241 aa)) folds into the ATP-grasp domain. Position 35 to 97 (35 to 97 (FAEVGFPCVL…EEAVDIDREI (63 aa))) interacts with ATP. Positions 186 and 188 each coordinate Mg(2+).

The protein belongs to the succinate/malate CoA ligase beta subunit family. Forms a complex with SauD. Mg(2+) is required as a cofactor.

It carries out the reaction sulfoacetate + ATP + CoA = sulfoacetyl-CoA + ADP + phosphate. Its function is as follows. Involved in the degradation of sulfoacetate. Catalyzes the CoA- and ATP-dependent conversion of sulfoacetate to sulfoacetyl-CoA and ADP. Cannot use other sulfonic and carboxylic acids, and shows only residual activity with 3-sulfopropanoate and malonic acid. This is ADP-forming sulfoacetate-CoA ligase subunit SauC from Bilophila wadsworthia (strain 3_1_6).